An 826-amino-acid chain; its full sequence is Lethal(3)malignant brain tumor-like protein 1 (826 aa).

The residue at position 136 (Ser-136) is a Phosphoserine. Disordered regions lie at residues 167-197 (LEPPVDASSCKCQACGPQQSSGLDVGSSGDR) and 220-271 (LLKP…RSQL). Basic and acidic residues predominate over residues 242–256 (EAVKQGEGKDAEREP). MBT repeat units follow at residues 280–380 (WSWE…LQLP), 388–487 (FSWS…LTPP), and 496–591 (FCWE…LEPP). The interval 453–460 (FDDWGDTY) is interaction with monomethylated and dimethylated peptides. Residues 586–621 (HPLEPPLRPRESSSVSPGGCPPLSHRSPPHTKTSKY) form a disordered region. Residues 612–621 (SPPHTKTSKY) show a composition bias toward basic residues. The CCHHC-type zinc finger occupies 619–662 (SKYNFHHRKCPTPGCDGSGHVTGKFTAHHCLSGCPLAEKNQSRL). Zn(2+) contacts are provided by Cys-628, Cys-633, His-646, and Cys-652. Positions 663–699 (KAELSDSETAARKKNPSNLSPRKKPRHQGRIGRPPKY) are disordered. Positions 683 to 699 (PRKKPRHQGRIGRPPKY) are enriched in basic residues. The SAM domain occupies 757–821 (WTIEEVFGFV…YNAILMFKNT (65 aa)).

In terms of assembly, homodimer. Interacts with RB1/RB (when monomethylated at 'Lys-860'). Interacts with p53/TP53 (when monomethylated at 'Lys-382'). Interacts with CBX3, ETV6, KMT5A and VCP/p97. In terms of processing, ubiquitinated in a VCP/p97-dependent way following DNA damage, leading to its removal from DNA damage sites, promoting accessibility of H4K20me2 mark for DNA repair protein TP53BP1, which is then recruited to DNA damage sites. Highly expressed in brain, testis, eyes, and ES cells.

The protein localises to the nucleus. Polycomb group (PcG) protein that specifically recognizes and binds mono- and dimethyllysine residues on target proteins, thereby acting as a 'reader' of a network of post-translational modifications. PcG proteins maintain the transcriptionally repressive state of genes: acts as a chromatin compaction factor by recognizing and binding mono- and dimethylated histone H1b/H1-4 at 'Lys-26' (H1bK26me1 and H1bK26me2) and histone H4 at 'Lys-20' (H4K20me1 and H4K20me2), leading to condense chromatin and repress transcription. Recognizes and binds p53/TP53 monomethylated at 'Lys-382', leading to repress p53/TP53-target genes. Also recognizes and binds RB1/RB monomethylated at 'Lys-860'. Participates in the ETV6-mediated repression. Probably plays a role in cell proliferation. Overexpression induces multinucleated cells, suggesting that it is required to accomplish normal mitosis. The protein is Lethal(3)malignant brain tumor-like protein 1 (L3mbtl1) of Mus musculus (Mouse).